Here is a 497-residue protein sequence, read N- to C-terminus: MENKKTKGISLFALLAIIISGAIGGGVFNLANDLARGSTPGGVVISWLFIGFGILMLVLSFNRLITIKPDLSGVSDYARAGFGDFVGFLSGWGYWISAWTGTIGFAVLMMTSADYFFPSKFANSNGSLTILSVIIVSIISWILMLLVDRGVETAAAVNAIVMIAKLIPLVVFSITGIILFKANVFTQHFWQTFTTNFAADGSVKDFVWHAMTVSGLLSQIKGSLMVMVWVFVGIEGATMMGNRAKKKSDTAKATVIGLAVLLVIYVLLSLLPYGYMDQASLANVKAPGLVYILNEMVGGWGGSLMAVGLMISLLGAWLSWTMLPVEATQQLAEQKLLPSWFGKLNKYHAPSNSLLITQLMIQIFIIITYFVANAYNVFIYMATAVIMICYALVGAYLFKIGLKEASVKNILIGFFTFAFQALALYLSGWQYVWLAMILYTIGFLLFIGAKKESHQSISVKEWLGMLVVTVLGVLAIVVLICGAKAGTAFDLRGLLGF.

13 helical membrane-spanning segments follow: residues 8-28, 41-61, 88-108, 127-147, 160-180, 220-240, 255-275, 297-317, 354-374, 378-398, 406-426, 429-449, and 462-482; these read GISL…GGVF, GGVV…VLSF, FLSG…FAVL, SLTI…MLLV, IVMI…IILF, IKGS…ATMM, VIGL…PYGY, VGGW…LGAW, LLIT…VANA, FIYM…AYLF, SVKN…ALYL, WQYV…FIGA, and WLGM…LICG.

It belongs to the amino acid-polyamine-organocation (APC) superfamily. Basic amino acid/polyamine antiporter (APA) (TC 2.A.3.2) family.

The protein resides in the cell membrane. It carries out the reaction L-ornithine(in) + L-arginine(out) = L-ornithine(out) + L-arginine(in). Functionally, catalyzes electroneutral exchange between L-arginine and L-ornithine. Can also efficiently translocate L-alanine. May function in vivo as a L-arginine/L-alanine exchanger in a pathway together with the arcT gene, which is found adjacent to the arcD2 gene in the ADI gene cluster. The protein is Arginine/ornithine antiporter ArcD2 of Lactococcus lactis subsp. cremoris (strain MG1363).